The chain runs to 708 residues: Ion-translocating oxidoreductase complex subunit C (708 aa).

4Fe-4S ferredoxin-type domains lie at 369–397 (GEPQ…QQLY) and 407–436 (KATT…VQYF). Residues C377, C380, C383, C387, C416, C419, C422, and C426 each coordinate [4Fe-4S] cluster. Positions 599–686 (KARKLEQQQS…EEQVDPRKAA (88 aa)) are disordered.

This sequence belongs to the 4Fe4S bacterial-type ferredoxin family. RnfC subfamily. In terms of assembly, the complex is composed of six subunits: RsxA, RsxB, RsxC, RsxD, RsxE and RsxG. [4Fe-4S] cluster is required as a cofactor.

The protein localises to the cell inner membrane. Functionally, part of a membrane-bound complex that couples electron transfer with translocation of ions across the membrane. Required to maintain the reduced state of SoxR. This chain is Ion-translocating oxidoreductase complex subunit C, found in Escherichia coli (strain 55989 / EAEC).